We begin with the raw amino-acid sequence, 418 residues long: Tyrosine--tRNA ligase (418 aa).

Tyr-35 serves as a coordination point for L-tyrosine. The short motif at 40–49 is the 'HIGH' region element; it reads PTAKSLHIGH. L-tyrosine-binding residues include Tyr-168 and Gln-172. Residues 228-232 carry the 'KMSKS' region motif; the sequence is KYGKT. Lys-231 lines the ATP pocket. The S4 RNA-binding domain maps to 352–410; sequence PTVVGAMVAAGVVDTKSGGRRAVAEGGAYLNNVKVADPDQRLTDDDFLCGRVALVRRGK.

The protein belongs to the class-I aminoacyl-tRNA synthetase family. TyrS type 1 subfamily. In terms of assembly, homodimer.

Its subcellular location is the cytoplasm. It catalyses the reaction tRNA(Tyr) + L-tyrosine + ATP = L-tyrosyl-tRNA(Tyr) + AMP + diphosphate + H(+). Its function is as follows. Catalyzes the attachment of tyrosine to tRNA(Tyr) in a two-step reaction: tyrosine is first activated by ATP to form Tyr-AMP and then transferred to the acceptor end of tRNA(Tyr). The polypeptide is Tyrosine--tRNA ligase (Cutibacterium acnes (strain DSM 16379 / KPA171202) (Propionibacterium acnes)).